The following is a 458-amino-acid chain: Phosphomethylpyrimidine synthase (458 aa).

Substrate is bound by residues N80, M109, Y139, H175, 195–197, 236–239, and E275; these read SRG and DSLR. Residue H279 coordinates Zn(2+). Y302 is a binding site for substrate. Residue H343 participates in Zn(2+) binding. Residues C423, C426, and C431 each coordinate [4Fe-4S] cluster.

This sequence belongs to the ThiC family. [4Fe-4S] cluster serves as cofactor.

It carries out the reaction 5-amino-1-(5-phospho-beta-D-ribosyl)imidazole + S-adenosyl-L-methionine = 4-amino-2-methyl-5-(phosphooxymethyl)pyrimidine + CO + 5'-deoxyadenosine + formate + L-methionine + 3 H(+). The protein operates within cofactor biosynthesis; thiamine diphosphate biosynthesis. Functionally, catalyzes the synthesis of the hydroxymethylpyrimidine phosphate (HMP-P) moiety of thiamine from aminoimidazole ribotide (AIR) in a radical S-adenosyl-L-methionine (SAM)-dependent reaction. This chain is Phosphomethylpyrimidine synthase, found in Acaryochloris marina (strain MBIC 11017).